Consider the following 239-residue polypeptide: 1-(5-phosphoribosyl)-5-[(5-phosphoribosylamino)methylideneamino] imidazole-4-carboxamide isomerase (239 aa).

Aspartate 12 functions as the Proton acceptor in the catalytic mechanism. Catalysis depends on aspartate 132, which acts as the Proton donor.

It belongs to the HisA/HisF family.

The protein resides in the cytoplasm. It carries out the reaction 1-(5-phospho-beta-D-ribosyl)-5-[(5-phospho-beta-D-ribosylamino)methylideneamino]imidazole-4-carboxamide = 5-[(5-phospho-1-deoxy-D-ribulos-1-ylimino)methylamino]-1-(5-phospho-beta-D-ribosyl)imidazole-4-carboxamide. Its pathway is amino-acid biosynthesis; L-histidine biosynthesis; L-histidine from 5-phospho-alpha-D-ribose 1-diphosphate: step 4/9. This Natronomonas pharaonis (strain ATCC 35678 / DSM 2160 / CIP 103997 / JCM 8858 / NBRC 14720 / NCIMB 2260 / Gabara) (Halobacterium pharaonis) protein is 1-(5-phosphoribosyl)-5-[(5-phosphoribosylamino)methylideneamino] imidazole-4-carboxamide isomerase.